The following is a 589-amino-acid chain: Guanylate-binding protein 2 (589 aa).

A GTPase domain (Globular) region spans residues 1–309 (MASEIHMLQP…GAISSGSLPC (309 aa)). One can recognise a GB1/RHD3-type G domain in the interval 35 to 276 (NQPVVVVAIV…FTSYIFSYSA (242 aa)). GTP is bound by residues 45–52 (GLYRTGKS), 181–182 (RD), and leucine 245. Cysteine 586 carries the post-translational modification Cysteine methyl ester. Cysteine 586 carries S-geranylgeranyl cysteine lipidation. Positions 587 to 589 (TIL) are cleaved as a propeptide — removed in mature form.

Belongs to the TRAFAC class dynamin-like GTPase superfamily. GB1/RHD3 GTPase family. GB1 subfamily. As to quaternary structure, homodimer; homodimerization occurs upon GTP-binding and is required for the association with membranous structures. Heterodimer with other family members, including GBP1, GBP3, GBP4 and GBP5. Isoprenylation is required for proper subcellular location. In terms of tissue distribution, widely expressed.

It is found in the cytoplasmic vesicle membrane. The protein resides in the golgi apparatus membrane. It localises to the cytoplasm. Its subcellular location is the perinuclear region. The enzyme catalyses GTP + H2O = GDP + phosphate + H(+). Interferon (IFN)-inducible GTPase that plays important roles in innate immunity against a diverse range of bacterial, viral and protozoan pathogens. Hydrolyzes GTP to GMP in 2 consecutive cleavage reactions, but the major reaction product is GDP. Following infection, recruited to the pathogen-containing vacuoles or vacuole-escaped bacteria and acts as a positive regulator of inflammasome assembly by promoting the release of inflammasome ligands from bacteria. Acts by promoting lysis of pathogen-containing vacuoles, releasing pathogens into the cytosol. Following pathogen release in the cytosol, promotes recruitment of proteins that mediate bacterial cytolysis: this liberates ligands that are detected by inflammasomes, such as lipopolysaccharide (LPS) that activates the non-canonical CASP4/CASP11 inflammasome or double-stranded DNA (dsDNA) that activates the AIM2 inflammasome. Confers protection to the protozoan pathogen Toxoplasma gondii. Independently of its GTPase activity, acts as an inhibitor of various viruses infectivity by inhibiting FURIN-mediated maturation of viral envelope proteins. This chain is Guanylate-binding protein 2 (Gbp2), found in Rattus norvegicus (Rat).